The sequence spans 117 residues: Large ribosomal subunit protein uL18 (117 aa).

It belongs to the universal ribosomal protein uL18 family. Part of the 50S ribosomal subunit; part of the 5S rRNA/L5/L18/L25 subcomplex. Contacts the 5S and 23S rRNAs.

In terms of biological role, this is one of the proteins that bind and probably mediate the attachment of the 5S RNA into the large ribosomal subunit, where it forms part of the central protuberance. The polypeptide is Large ribosomal subunit protein uL18 (Photorhabdus laumondii subsp. laumondii (strain DSM 15139 / CIP 105565 / TT01) (Photorhabdus luminescens subsp. laumondii)).